The sequence spans 377 residues: 4-hydroxy-3-methylbut-2-en-1-yl diphosphate synthase (flavodoxin) (377 aa).

Residues cysteine 270, cysteine 273, cysteine 305, and glutamate 312 each contribute to the [4Fe-4S] cluster site.

Belongs to the IspG family. [4Fe-4S] cluster serves as cofactor.

The enzyme catalyses (2E)-4-hydroxy-3-methylbut-2-enyl diphosphate + oxidized [flavodoxin] + H2O + 2 H(+) = 2-C-methyl-D-erythritol 2,4-cyclic diphosphate + reduced [flavodoxin]. It functions in the pathway isoprenoid biosynthesis; isopentenyl diphosphate biosynthesis via DXP pathway; isopentenyl diphosphate from 1-deoxy-D-xylulose 5-phosphate: step 5/6. In terms of biological role, converts 2C-methyl-D-erythritol 2,4-cyclodiphosphate (ME-2,4cPP) into 1-hydroxy-2-methyl-2-(E)-butenyl 4-diphosphate. This chain is 4-hydroxy-3-methylbut-2-en-1-yl diphosphate synthase (flavodoxin), found in Bacillus subtilis (strain 168).